A 1321-amino-acid polypeptide reads, in one-letter code: Bile salt export pump (1321 aa).

Topologically, residues 1-62 (MSDSVILRSV…FSSWTDIWLM (62 aa)) are cytoplasmic. The ABC transmembrane type-1 1 domain occupies 62–385 (MCMGSLCACI…ASPCLEAFAA (324 aa)). Residues 63-83 (CMGSLCACIHGIAQPGVLLIF) traverse the membrane as a helical segment. Over 84–147 (GTMTDVFIDY…MIRFAGYYAG (64 aa)) the chain is Extracellular. Asparagine 109, asparagine 116, asparagine 122, and asparagine 125 each carry an N-linked (GlcNAc...) asparagine glycan. Residues 148–168 (IGIAVLTTGYIQICFWGIAAA) form a helical membrane-spanning segment. The Cytoplasmic segment spans residues 169-215 (HQIQKMRKSYFRKIMRMGIGWVDCNSVGKLNTPFSVDFNKINDSSAD). A helical transmembrane segment spans residues 216–236 (QLAIFIQGMTSPIFGFLVGFS). Residues 237–240 (QWWK) lie on the Extracellular side of the membrane. The chain crosses the membrane as a helical span at residues 241–261 (LTLVIISVSPLIGLGAAIIGL). At 262–319 (SVSKFTDYELKAYAKAGSVADEVISSMRTVAAFGGEKKEVERYEKNLVFAQRWGIRKG) the chain is on the cytoplasmic side. A helical transmembrane segment spans residues 320 to 340 (IVMGFFTGYMWCLIFFCYALA). Residues 341-353 (FWYGSKLVLEEGE) are Extracellular-facing. Residues 354-374 (YSPGALVQIFLSVIIGALNLG) traverse the membrane as a helical segment. Over 375 to 755 (NASPCLEAFA…KLNAPEWPYM (381 aa)) the chain is Cytoplasmic. Residues 420–656 (IEFHNVTFHY…KGVYFALVTL (237 aa)) enclose the ABC transporter 1 domain. 455 to 462 (GPSGAGKS) serves as a coordination point for ATP. Phosphothreonine is present on threonine 586. Serine 587 is modified (phosphoserine). Positions 651–672 (FALVTLQSQRNQGDQEENEKDA) are interaction with HAX1. Residues 659-735 (QRNQGDQEEN…KDKDLPAQED (77 aa)) are disordered. The segment covering 664 to 677 (DQEENEKDATEDDI) has biased composition (acidic residues). Residues serine 690, serine 701, and serine 704 each carry the phosphoserine modification. Residues 714–731 (VEDHKSTHEEDRKDKDLP) show a composition bias toward basic and acidic residues. The 289-residue stretch at 755 to 1043 (MLLGSMGAAV…ASSYTPSYAK (289 aa)) folds into the ABC transmembrane type-1 2 domain. A helical transmembrane segment spans residues 756–776 (LLGSMGAAVNGAVTPLYAFLF). Topologically, residues 777–794 (SQILGTFSLPDKEEQRSQ) are extracellular. Residues 795–815 (INGICLLFVTLGCVSFFTQFL) traverse the membrane as a helical segment. At 816-869 (QGYTFAKSGELLTKRLRKFGFRAMLGQDIGWFDDLRNSPGALTTRLATDASQVQ) the chain is on the cytoplasmic side. The next 2 helical transmembrane spans lie at 870-890 (GATG…TVAM) and 891-911 (IIAF…FPFL). The Cytoplasmic segment spans residues 912–979 (ALSGALQTKM…PYKMAIKKAN (68 aa)). Residues 980–1000 (VYGLCFGFSQCITFIANSASY) form a helical membrane-spanning segment. Residues 1001 to 1011 (RYGGYLISNEG) lie on the Extracellular side of the membrane. The helical transmembrane segment at 1012 to 1032 (LHFSYVFRVISAVVLSATALG) threads the bilayer. Residues 1033-1321 (RASSYTPSYA…KLVTTGSPIS (289 aa)) lie on the Cytoplasmic side of the membrane. Positions 1078-1316 (IDFVDCKFTY…KGAYYKLVTT (239 aa)) constitute an ABC transporter 2 domain. Position 1113–1120 (1113–1120 (GSSGCGKS)) interacts with ATP. Phosphoserine is present on residues serine 1214 and serine 1321.

Belongs to the ABC transporter superfamily. ABCB family. Multidrug resistance exporter (TC 3.A.1.201) subfamily. In terms of assembly, interacts with HAX1. Interacts with the adapter protein complex 2 (AP-2) throught AP2A2 or AP2A1; this interaction regulates cell membrane expression of ABCB11 through its internalization in a clathrin-dependent manner and its subsequent degradation. In terms of processing, N-glycosylated. Post-translationally, ubiquitinated; short-chain ubiquitination regulates cell-Surface expression of ABCB11. Expressed predominantly, if not exclusively in the liver, where it was further localized to the canalicular microvilli and to subcanalicular vesicles of the hepatocytes by in situ.

The protein localises to the apical cell membrane. Its subcellular location is the recycling endosome membrane. It is found in the endosome. It localises to the cell membrane. It catalyses the reaction cholate(in) + ATP + H2O = cholate(out) + ADP + phosphate + H(+). The enzyme catalyses taurocholate(in) + ATP + H2O = taurocholate(out) + ADP + phosphate + H(+). The catalysed reaction is glycocholate(in) + ATP + H2O = glycocholate(out) + ADP + phosphate + H(+). It carries out the reaction glycochenodeoxycholate(in) + ATP + H2O = glycochenodeoxycholate(out) + ADP + phosphate + H(+). It catalyses the reaction taurochenodeoxycholate(in) + ATP + H2O = taurochenodeoxycholate(out) + ADP + phosphate + H(+). The enzyme catalyses glycoursodeoxycholate(in) + ATP + H2O = glycoursodeoxycholate(out) + ADP + phosphate + H(+). The catalysed reaction is tauroursodeoxycholate(in) + ATP + H2O = tauroursodeoxycholate(out) + ADP + phosphate + H(+). It carries out the reaction taurodeoxycholate(in) + ATP + H2O = taurodeoxycholate(out) + ADP + phosphate + H(+). It catalyses the reaction taurolithocholate 3-sulfate(in) + ATP + H2O = taurolithocholate 3-sulfate(out) + ADP + phosphate + H(+). The enzyme catalyses pravastatin(in) + ATP + H2O = pravastatin(out) + ADP + phosphate + H(+). Its activity is regulated as follows. The uptake of taurocholate is inhibited by taurolithocholate sulfate with an IC(50) of 9 uM. Pravastatin competitively inhibits the transport of taurocholic acid. Cyclosporin A, glibenclamide, rifampicin and troglitazonestrongly competitively inhibit the transport activity of taurocholate. The canalicular transport activity of taurocholate is strongly dependent on canalicular membrane cholesterol content. The uptake of taurocholate is increased by short- and medium-chain fatty acids. Cholesterol increases transport capacity of taurocholate without affecting the affinity for the substrate. Functionally, catalyzes the transport of the major hydrophobic bile salts, such as taurine and glycine-conjugated cholic acid across the canalicular membrane of hepatocytes in an ATP-dependent manner, therefore participates in hepatic bile acid homeostasis and consequently to lipid homeostasis through regulation of biliary lipid secretion in a bile salts dependent manner. Transports taurine-conjugated bile salts more rapidly than glycine-conjugated bile salts. Also transports non-bile acid compounds, such as pravastatin and fexofenadine in an ATP-dependent manner and may be involved in their biliary excretion. The polypeptide is Bile salt export pump (Oryctolagus cuniculus (Rabbit)).